Reading from the N-terminus, the 611-residue chain is Muscarinic acetylcholine receptor gar-3 (611 aa).

Topologically, residues 1 to 67 (MQSSSLGNAD…LLGEEGRMVM (67 aa)) are extracellular. N-linked (GlcNAc...) asparagine glycans are attached at residues Asn28 and Asn33. A helical membrane pass occupies residues 68-88 (IVVIGAMFALVTSLGNLMVMV). The Cytoplasmic segment spans residues 89–101 (SFKIDKQLQTISN). The chain crosses the membrane as a helical span at residues 102–122 (YFLFSLAVADIAIGVISIPMF). Residues 123-140 (TYYTAIQKWDLGYTMCQF) are Extracellular-facing. A disulfide bond links Cys138 and Cys218. Residues 141 to 161 (WLCIDYLMSNASVLNLLLISF) form a helical membrane-spanning segment. Topologically, residues 162 to 181 (DRYFSVTRPLSYRPRRTTKK) are cytoplasmic. Residues 182–202 (ALTMIACTYIISLILWPPWII) traverse the membrane as a helical segment. Residues 203–227 (SWPYIEGKFTAEPGTCVVQFLQTNP) lie on the Extracellular side of the membrane. Residues 228-248 (YVTVGTAVAAFYLPVTIMCIL) traverse the membrane as a helical segment. At 249–525 (YTRVYWETQK…RKQESKAAKT (277 aa)) the chain is on the cytoplasmic side. 4 disordered regions span residues 299–364 (RRSM…SSEA), 377–432 (SHFA…NNNS), 446–477 (SRPS…NSEI), and 500–519 (FSSQ…RKQE). Residues 307-317 (SSTSIIKSSGS) show a composition bias toward low complexity. Over residues 503-519 (QERKSEKEQRKNERKQE) the composition is skewed to basic and acidic residues. A helical membrane pass occupies residues 526–546 (LSAILCAFIATWTPYNLIVCW). Over 547-557 (EAFFPNTVPNV) the chain is Extracellular. The chain crosses the membrane as a helical span at residues 558–578 (LWTFSYFLCYINSTINPLCYA). Residues 579–611 (LCNARFRHTYMRILRCKFKAERPTMNQGYVRRN) lie on the Cytoplasmic side of the membrane.

Belongs to the G-protein coupled receptor 1 family. Muscarinic acetylcholine receptor subfamily.

Its subcellular location is the cell membrane. Its function is as follows. The muscarinic acetylcholine receptor mediates various cellular responses, including inhibition of adenylate cyclase, breakdown of phosphoinositides and modulation of potassium channels through the action of G proteins. Primary transducing effect is Pi turnover. Enhances the release of the neurotransmitter acetlycholine in cholinergic motor neurons, which in turn positively feeds back to depolarize body wall muscles and allows for the maintenance of normal body posture and locomotion. This is Muscarinic acetylcholine receptor gar-3 (gar-3) from Caenorhabditis elegans.